The sequence spans 719 residues: DNA ligase (719 aa).

NAD(+) contacts are provided by residues 42-46 (DAAYD), 92-93 (SL), and Glu126. The active-site N6-AMP-lysine intermediate is Lys128. The NAD(+) site is built by Arg149, Glu185, Lys301, and Lys325. The Zn(2+) site is built by Cys430, Cys433, Cys448, and Cys454. Positions 640–719 (ATGSPVEGKT…DDWFKLVGED (80 aa)) constitute a BRCT domain.

Belongs to the NAD-dependent DNA ligase family. LigA subfamily. Mg(2+) is required as a cofactor. The cofactor is Mn(2+).

It carries out the reaction NAD(+) + (deoxyribonucleotide)n-3'-hydroxyl + 5'-phospho-(deoxyribonucleotide)m = (deoxyribonucleotide)n+m + AMP + beta-nicotinamide D-nucleotide.. DNA ligase that catalyzes the formation of phosphodiester linkages between 5'-phosphoryl and 3'-hydroxyl groups in double-stranded DNA using NAD as a coenzyme and as the energy source for the reaction. It is essential for DNA replication and repair of damaged DNA. The polypeptide is DNA ligase (Brucella ovis (strain ATCC 25840 / 63/290 / NCTC 10512)).